The sequence spans 501 residues: Lysine--tRNA ligase (501 aa).

Mg(2+)-binding residues include Glu412 and Glu419.

Belongs to the class-II aminoacyl-tRNA synthetase family. In terms of assembly, homodimer. The cofactor is Mg(2+).

The protein resides in the cytoplasm. The catalysed reaction is tRNA(Lys) + L-lysine + ATP = L-lysyl-tRNA(Lys) + AMP + diphosphate. This chain is Lysine--tRNA ligase, found in Dechloromonas aromatica (strain RCB).